We begin with the raw amino-acid sequence, 170 residues long: Plastocyanin, chloroplastic (170 aa).

The transit peptide at 1-71 (MATVTSAAVA…SAMLASNAMA (71 aa)) directs the protein to the chloroplast. The region spanning 72-170 (LEVLLGGDDG…AGMVGKVTVN (99 aa)) is the Plastocyanin-like domain. The Cu cation site is built by His-108, Cys-155, His-158, and Met-163.

It belongs to the plastocyanin family. Cu(2+) is required as a cofactor.

The protein localises to the plastid. The protein resides in the chloroplast thylakoid membrane. Participates in electron transfer between P700 and the cytochrome b6-f complex in photosystem I. The chain is Plastocyanin, chloroplastic (PETE) from Solanum lycopersicum (Tomato).